A 109-amino-acid chain; its full sequence is Small ribosomal subunit protein uS15c (109 aa).

The protein belongs to the universal ribosomal protein uS15 family. In terms of assembly, part of the 30S ribosomal subunit.

It is found in the plastid. The protein resides in the chloroplast. This chain is Small ribosomal subunit protein uS15c (rps15-A), found in Trachelium caeruleum (Blue throatwort).